Consider the following 174-residue polypeptide: Crossover junction endodeoxyribonuclease RuvC (174 aa).

Active-site residues include D8, E68, and D140. Residues D8, E68, and D140 each coordinate Mg(2+).

The protein belongs to the RuvC family. Homodimer which binds Holliday junction (HJ) DNA. The HJ becomes 2-fold symmetrical on binding to RuvC with unstacked arms; it has a different conformation from HJ DNA in complex with RuvA. In the full resolvosome a probable DNA-RuvA(4)-RuvB(12)-RuvC(2) complex forms which resolves the HJ. Mg(2+) serves as cofactor.

It localises to the cytoplasm. The catalysed reaction is Endonucleolytic cleavage at a junction such as a reciprocal single-stranded crossover between two homologous DNA duplexes (Holliday junction).. Its function is as follows. The RuvA-RuvB-RuvC complex processes Holliday junction (HJ) DNA during genetic recombination and DNA repair. Endonuclease that resolves HJ intermediates. Cleaves cruciform DNA by making single-stranded nicks across the HJ at symmetrical positions within the homologous arms, yielding a 5'-phosphate and a 3'-hydroxyl group; requires a central core of homology in the junction. The consensus cleavage sequence is 5'-(A/T)TT(C/G)-3'. Cleavage occurs on the 3'-side of the TT dinucleotide at the point of strand exchange. HJ branch migration catalyzed by RuvA-RuvB allows RuvC to scan DNA until it finds its consensus sequence, where it cleaves and resolves the cruciform DNA. This chain is Crossover junction endodeoxyribonuclease RuvC, found in Legionella pneumophila (strain Lens).